The primary structure comprises 67 residues: MDATAGLHLGFRRLGILTQAASPWNQRSTDVGFGRPPTTYNLLLAGIPVAYSLGLFIGGIGIQLFDI.

This is an uncharacterized protein from Vaccinia virus (strain Copenhagen) (VACV).